The sequence spans 216 residues: Redox-sensing transcriptional repressor Rex (216 aa).

The H-T-H motif DNA-binding region spans 16-55; it reads VYYRYLNVLLNANKHRVSSTELSEAVQVDSATIRRDFSYF. 90–95 contributes to the NAD(+) binding site; sequence GVGSLG.

It belongs to the transcriptional regulatory Rex family. Homodimer.

The protein localises to the cytoplasm. Functionally, modulates transcription in response to changes in cellular NADH/NAD(+) redox state. The polypeptide is Redox-sensing transcriptional repressor Rex (Limosilactobacillus fermentum (strain NBRC 3956 / LMG 18251) (Lactobacillus fermentum)).